Here is a 487-residue protein sequence, read N- to C-terminus: 6-phosphogluconate dehydrogenase, decarboxylating 1, chloroplastic (487 aa).

At methionine 1 the chain carries N-acetylmethionine. NADP(+) contacts are provided by residues 13–18 (GLAVMG), 36–38 (NRT), 80–82 (VKA), and asparagine 108. Substrate is bound by residues asparagine 108 and 134-136 (SGG). The active-site Proton acceptor is the lysine 188. 191–192 (HN) provides a ligand contact to substrate. The Proton donor role is filled by glutamate 195. 5 residues coordinate substrate: tyrosine 196, lysine 266, arginine 293, arginine 458, and histidine 464.

Belongs to the 6-phosphogluconate dehydrogenase family. As to quaternary structure, forms homodimer. Forms heterodimers with PGD2 or PGD3.

It localises to the plastid. It is found in the chloroplast. The protein resides in the cytoplasm. Its subcellular location is the cytosol. It carries out the reaction 6-phospho-D-gluconate + NADP(+) = D-ribulose 5-phosphate + CO2 + NADPH. It functions in the pathway carbohydrate degradation; pentose phosphate pathway; D-ribulose 5-phosphate from D-glucose 6-phosphate (oxidative stage): step 3/3. In terms of biological role, catalyzes the oxidative decarboxylation of 6-phosphogluconate to ribulose 5-phosphate and CO(2), with concomitant reduction of NADP to NADPH. This chain is 6-phosphogluconate dehydrogenase, decarboxylating 1, chloroplastic, found in Arabidopsis thaliana (Mouse-ear cress).